A 578-amino-acid chain; its full sequence is SUMOylated effector protein AmpA (578 aa).

Residues 144-169 (PQTVDPSVVESATGSGVDTQEEQEID) are disordered. A run of 3 repeats spans residues 180 to 272 (TEEQ…SVEA), 304 to 425 (KEET…VSVE), and 428 to 557 (TEEP…MQQE). The segment at 180-557 (TEEQEVILEE…VEADAGMQQE (378 aa)) is 3 X approximate tandem repeats. A disordered region spans residues 516–578 (VSVEADAGMQ…DPDDEDVLSY (63 aa)).

Polysumoylated during infection on at least two lysine residues, in the N- and C-terminal section. SUMO2/3 modification of AmpA throughout the infection cycle is likely critical for bacterial intracellular survival, while terminal SUMO1 conjugation of AmpA may promote a late-stage infection cycle event. Only a small portion of the available AmpA pool is actually SUMOylated at any given time.

Its subcellular location is the secreted. The protein resides in the host membrane. It localises to the host cytoplasm. The protein localises to the host cytosol. Functionally, secreted effector that hijacks host cell SUMOylation during A.phagocytophilum infection and is important for the pathogen's intracellular survival. The polypeptide is SUMOylated effector protein AmpA (Anaplasma phagocytophilum (strain HZ)).